The sequence spans 183 residues: MKNYVIQRRYAKALLLIGKEDNNAEQYKEELNGFVSVLDMEKAFESAITNPLYPVEARRKVLDMVIEKLGVSVMMRSFLALLFEKRRIQHVRGINEVYQNLVDELKGIVRADVVSAGELSDDVVEKIRASLSKMTGKQVIVDIAQDPTLIGGIVTKVGDMVLDGSIKTQLSNMKESLKKGERV.

This sequence belongs to the ATPase delta chain family. As to quaternary structure, F-type ATPases have 2 components, F(1) - the catalytic core - and F(0) - the membrane proton channel. F(1) has five subunits: alpha(3), beta(3), gamma(1), delta(1), epsilon(1). F(0) has three main subunits: a(1), b(2) and c(10-14). The alpha and beta chains form an alternating ring which encloses part of the gamma chain. F(1) is attached to F(0) by a central stalk formed by the gamma and epsilon chains, while a peripheral stalk is formed by the delta and b chains.

Its subcellular location is the cell inner membrane. In terms of biological role, f(1)F(0) ATP synthase produces ATP from ADP in the presence of a proton or sodium gradient. F-type ATPases consist of two structural domains, F(1) containing the extramembraneous catalytic core and F(0) containing the membrane proton channel, linked together by a central stalk and a peripheral stalk. During catalysis, ATP synthesis in the catalytic domain of F(1) is coupled via a rotary mechanism of the central stalk subunits to proton translocation. This protein is part of the stalk that links CF(0) to CF(1). It either transmits conformational changes from CF(0) to CF(1) or is implicated in proton conduction. The protein is ATP synthase subunit delta of Desulfosudis oleivorans (strain DSM 6200 / JCM 39069 / Hxd3) (Desulfococcus oleovorans).